The chain runs to 327 residues: 2-oxoisovalerate dehydrogenase subunit beta (327 aa).

Thiamine diphosphate-binding positions include E29, 58 to 60 (LAE), Q82, and 86 to 89 (FIMP). Substrate is bound by residues 83-86 (FADF) and H129. Catalysis depends on H129, which acts as the Proton acceptor.

In terms of assembly, heterotetramer of two alpha and two beta chains. Directly associated with ODBA in the E1 complex. It depends on thiamine diphosphate as a cofactor.

The enzyme catalyses N(6)-[(R)-lipoyl]-L-lysyl-[protein] + 3-methyl-2-oxobutanoate + H(+) = N(6)-[(R)-S(8)-2-methylpropanoyldihydrolipoyl]-L-lysyl-[protein] + CO2. The branched-chain alpha-keto dehydrogenase complex catalyzes the overall conversion of alpha-keto acids to acyl-CoA and CO(2). It contains multiple copies of three enzymatic components: branched-chain alpha-keto acid decarboxylase (E1), lipoamide acyltransferase (E2) and lipoamide dehydrogenase (E3). The protein is 2-oxoisovalerate dehydrogenase subunit beta (bfmBAB) of Bacillus subtilis (strain 168).